The primary structure comprises 246 residues: Acetoacetyl-CoA reductase (246 aa).

Residues 13–15 (GGI), G35, R40, 60–62 (GNV), and 88–92 (NAGIT) contribute to the NADP(+) site. Residues D94 and 147 to 150 (QFGQ) each bind substrate. Residue Y153 is the Proton acceptor of the active site. Residue 183-186 (PGYI) coordinates NADP(+). Substrate contacts are provided by residues 184–185 (GY) and R195.

The protein belongs to the short-chain dehydrogenases/reductases (SDR) family. As to quaternary structure, homotetramer.

It is found in the cytoplasm. The catalysed reaction is a (3R)-3-hydroxyacyl-CoA + NADP(+) = a 3-oxoacyl-CoA + NADPH + H(+). It carries out the reaction (3R)-3-hydroxybutanoyl-CoA + NADP(+) = acetoacetyl-CoA + NADPH + H(+). The protein operates within biopolymer metabolism; poly-(R)-3-hydroxybutanoate biosynthesis. In terms of biological role, catalyzes the chiral reduction of acetoacetyl-CoA to (R)-3-hydroxybutyryl-CoA. Is involved in the biosynthesis of polyhydroxybutyrate (PHB), which is accumulated as an intracellular energy reserve material when cells grow under conditions of nutrient limitation. This Cupriavidus necator (strain ATCC 17699 / DSM 428 / KCTC 22496 / NCIMB 10442 / H16 / Stanier 337) (Ralstonia eutropha) protein is Acetoacetyl-CoA reductase.